The chain runs to 129 residues: Transcription antitermination protein NusB (129 aa).

This sequence belongs to the NusB family.

Functionally, involved in transcription antitermination. Required for transcription of ribosomal RNA (rRNA) genes. Binds specifically to the boxA antiterminator sequence of the ribosomal RNA (rrn) operons. This chain is Transcription antitermination protein NusB, found in Staphylococcus aureus (strain bovine RF122 / ET3-1).